A 406-amino-acid chain; its full sequence is LIM/homeobox protein Lhx2 (406 aa).

2 consecutive LIM zinc-binding domains span residues 53–105 (CAGC…CKED) and 115–168 (CARC…CRLH). Residues 250-270 (DAEHLDRDQPYPSSQKTKRMR) are disordered. A DNA-binding region (homeobox) is located at residues 266-325 (TKRMRTSFKHHQLRTMKSYFAINHNPDAKDLKQLAQKTGLTKRVLQVWFQNARAKFRRNL). Residues 307–323 (KRVLQVWFQNARAKFRR) carry the Nuclear localization signal motif. The segment covering 328 to 356 (QENTGVDKSTDAALQTGTPSGPASELSNA) has biased composition (polar residues). 2 disordered regions span residues 328–374 (QENT…TSPT) and 387–406 (GNLE…TNLF). A compositionally biased stretch (low complexity) spans 357-374 (SLSPSSTPTTLTDLTSPT). The span at 396 to 406 (SPSQTTLTNLF) shows a compositional bias: polar residues.

In terms of assembly, interacts (via LIM domains) with CITED2. Interacts with POU4F2.

Its subcellular location is the nucleus. Functionally, acts as a transcriptional activator. Stimulates the promoter of the alpha-glycoprotein gene. Transcriptional regulatory protein involved in the control of cell differentiation in developing lymphoid and neural cell types. In Homo sapiens (Human), this protein is LIM/homeobox protein Lhx2 (LHX2).